The sequence spans 655 residues: Acetyl-coenzyme A synthetase (655 aa).

CoA contacts are provided by residues 196–199 (RGGK) and Thr316. Residues 392 to 394 (GEP), 416 to 421 (DTWWQT), Asp507, and Arg522 contribute to the ATP site. Position 530 (Ser530) interacts with CoA. An ATP-binding site is contributed by Arg533. Val544 and Val549 together coordinate Mg(2+). Lys619 is modified (N6-acetyllysine).

It belongs to the ATP-dependent AMP-binding enzyme family. It depends on Mg(2+) as a cofactor. Post-translationally, acetylated. Deacetylation by the SIR2-homolog deacetylase activates the enzyme.

The enzyme catalyses acetate + ATP + CoA = acetyl-CoA + AMP + diphosphate. Its function is as follows. Catalyzes the conversion of acetate into acetyl-CoA (AcCoA), an essential intermediate at the junction of anabolic and catabolic pathways. AcsA undergoes a two-step reaction. In the first half reaction, AcsA combines acetate with ATP to form acetyl-adenylate (AcAMP) intermediate. In the second half reaction, it can then transfer the acetyl group from AcAMP to the sulfhydryl group of CoA, forming the product AcCoA. The chain is Acetyl-coenzyme A synthetase from Thiobacillus denitrificans (strain ATCC 25259 / T1).